Reading from the N-terminus, the 234-residue chain is Purine nucleoside phosphorylase DeoD-type (234 aa).

His4 lines the a purine D-ribonucleoside pocket. Residues Gly20, Arg24, Arg43, and 87-90 contribute to the phosphate site; that span reads RVGT. Residues 179–181 and 203–204 contribute to the a purine D-ribonucleoside site; these read EME and SN.

It belongs to the PNP/UDP phosphorylase family. In terms of assembly, homohexamer; trimer of homodimers.

The catalysed reaction is a purine D-ribonucleoside + phosphate = a purine nucleobase + alpha-D-ribose 1-phosphate. It carries out the reaction a purine 2'-deoxy-D-ribonucleoside + phosphate = a purine nucleobase + 2-deoxy-alpha-D-ribose 1-phosphate. Its function is as follows. Catalyzes the reversible phosphorolytic breakdown of the N-glycosidic bond in the beta-(deoxy)ribonucleoside molecules, with the formation of the corresponding free purine bases and pentose-1-phosphate. In Latilactobacillus sakei subsp. sakei (strain 23K) (Lactobacillus sakei subsp. sakei), this protein is Purine nucleoside phosphorylase DeoD-type.